A 565-amino-acid polypeptide reads, in one-letter code: Periplasmic trehalase (565 aa).

The first 30 residues, 1–30 (MKSPAPSRPQKMALIPACIFLCFAALSVQA), serve as a signal peptide directing secretion. Substrate is bound by residues Arg-152, 159-160 (WD), Asn-196, 205-207 (RSQ), 277-279 (RPE), and Gly-310. Residues Asp-312 and Glu-496 each act as proton donor/acceptor in the active site. Residue Glu-511 participates in substrate binding. Residues 539–565 (CDNVPATRPLSESTTQPVKQKEAEPTP) form a disordered region.

The protein belongs to the glycosyl hydrolase 37 family. In terms of assembly, monomer.

The protein localises to the periplasm. The enzyme catalyses alpha,alpha-trehalose + H2O = alpha-D-glucose + beta-D-glucose. Provides the cells with the ability to utilize trehalose at high osmolarity by splitting it into glucose molecules that can subsequently be taken up by the phosphotransferase-mediated uptake system. This is Periplasmic trehalase from Escherichia coli O6:H1 (strain CFT073 / ATCC 700928 / UPEC).